A 554-amino-acid polypeptide reads, in one-letter code: Condensin-2 complex subunit H2 (554 aa).

5 positions are modified to phosphoserine: Ser45, Ser178, Ser182, Ser199, and Ser200. Positions 154–296 (PVDVHPMPRS…GQKRKRKGAT (143 aa)) are disordered. The span at 179-191 (RNGSPVSVRSISQ) shows a compositional bias: polar residues. Positions 201 to 210 (GDEDAEDVAE) are enriched in acidic residues. Phosphoserine is present on Ser441.

It belongs to the CND2 H2 (condensin-2 subunit 2) family. Component of the condensin-2 complex, which contains the SMC2 and SMC4 heterodimer, and three non SMC subunits, NCAPG2, NCAPH2 and NCAPD3 that probably regulate the complex.

It localises to the nucleus. Functionally, regulatory subunit of the condensin-2 complex, a complex that seems to provide chromosomes with an additional level of organization and rigidity and in establishing mitotic chromosome architecture. May promote the resolution of double-strand DNA catenanes (intertwines) between sister chromatids. Condensin-mediated compaction likely increases tension in catenated sister chromatids, providing directionality for type II topoisomerase-mediated strand exchanges toward chromatid decatenation. Required for decatenation of chromatin bridges at anaphase. Early in neurogenesis, may play an essential role to ensure accurate mitotic chromosome condensation in neuron stem cells, ultimately affecting neuron pool and cortex size. Seems to have lineage-specific role in T-cell development. The chain is Condensin-2 complex subunit H2 (Ncaph2) from Rattus norvegicus (Rat).